A 102-amino-acid polypeptide reads, in one-letter code: Large ribosomal subunit protein bL21 (102 aa).

Belongs to the bacterial ribosomal protein bL21 family. Part of the 50S ribosomal subunit. Contacts protein L20.

Functionally, this protein binds to 23S rRNA in the presence of protein L20. The sequence is that of Large ribosomal subunit protein bL21 from Listeria monocytogenes serotype 4b (strain F2365).